The sequence spans 90 residues: Co-chaperonin GroES (90 aa).

The protein belongs to the GroES chaperonin family. Heptamer of 7 subunits arranged in a ring. Interacts with the chaperonin GroEL.

It is found in the cytoplasm. In terms of biological role, together with the chaperonin GroEL, plays an essential role in assisting protein folding. The GroEL-GroES system forms a nano-cage that allows encapsulation of the non-native substrate proteins and provides a physical environment optimized to promote and accelerate protein folding. GroES binds to the apical surface of the GroEL ring, thereby capping the opening of the GroEL channel. The protein is Co-chaperonin GroES of Fusobacterium nucleatum subsp. polymorphum (Fusobacterium polymorphum).